A 689-amino-acid polypeptide reads, in one-letter code: Elongation factor G (689 aa).

The 275-residue stretch at 8-282 (LNTRNIGIMA…AVVDYLPSPI (275 aa)) folds into the tr-type G domain. Residues 17 to 24 (AHIDAGKT), 81 to 85 (DTPGH), and 135 to 138 (NKMD) each bind GTP.

It belongs to the TRAFAC class translation factor GTPase superfamily. Classic translation factor GTPase family. EF-G/EF-2 subfamily.

The protein resides in the cytoplasm. Its function is as follows. Catalyzes the GTP-dependent ribosomal translocation step during translation elongation. During this step, the ribosome changes from the pre-translocational (PRE) to the post-translocational (POST) state as the newly formed A-site-bound peptidyl-tRNA and P-site-bound deacylated tRNA move to the P and E sites, respectively. Catalyzes the coordinated movement of the two tRNA molecules, the mRNA and conformational changes in the ribosome. This chain is Elongation factor G, found in Mycoplasma capricolum subsp. capricolum (strain California kid / ATCC 27343 / NCTC 10154).